Reading from the N-terminus, the 262-residue chain is 5'-nucleotidase SurE (262 aa).

The a divalent metal cation site is built by Asp-8, Asp-9, Ser-40, and Asn-92.

It belongs to the SurE nucleotidase family. A divalent metal cation is required as a cofactor.

It is found in the cytoplasm. It catalyses the reaction a ribonucleoside 5'-phosphate + H2O = a ribonucleoside + phosphate. Its function is as follows. Nucleotidase that shows phosphatase activity on nucleoside 5'-monophosphates. The chain is 5'-nucleotidase SurE from Xylella fastidiosa (strain M23).